Reading from the N-terminus, the 203-residue chain is Translation initiation factor IF-3 (203 aa).

Positions Glu-172–Glu-182 are enriched in basic and acidic residues. The segment at Glu-172–Asp-203 is disordered.

This sequence belongs to the IF-3 family. In terms of assembly, monomer.

It is found in the cytoplasm. IF-3 binds to the 30S ribosomal subunit and shifts the equilibrium between 70S ribosomes and their 50S and 30S subunits in favor of the free subunits, thus enhancing the availability of 30S subunits on which protein synthesis initiation begins. This chain is Translation initiation factor IF-3, found in Helicobacter pylori (strain ATCC 700392 / 26695) (Campylobacter pylori).